A 499-amino-acid chain; its full sequence is Thermostable carboxypeptidase 1 (499 aa).

Residues 6 to 499 (QNETIKQILA…FVRWVKEKYL (494 aa)) enclose the Peptidase M32 domain. The HPF signature appears at 238 to 240 (HPF). A DXRXT motif is present at residues 248-252 (DVRIT). Position 269 (His269) interacts with Co(2+). Positions 269–273 (HEFGH) match the HEXXH motif. The Proton donor/acceptor role is filled by Glu270. His273 and Glu299 together coordinate Co(2+). The HES/GQ motif lies at 298 to 301 (HESQ). Residues 350-355 (IRTEAD) carry the I/NRXXA/SD motif. The short motif at 405 to 412 (GILQDIHW) is the GXXQDXHW element.

It belongs to the peptidase M32 family. As to quaternary structure, homodimer. Co(2+) is required as a cofactor. Requires Mn(2+) as cofactor.

The catalysed reaction is Release of a C-terminal amino acid with broad specificity, except for -Pro.. Its activity is regulated as follows. EDTA and DTT reversibly abolish carboxypeptidase activity. Its function is as follows. Broad specificity carboxypetidase that releases amino acids sequentially from the C-terminus, including neutral, aromatic, polar and basic residues, but not Pro, Gly, Asp and Glu. This chain is Thermostable carboxypeptidase 1, found in Pyrococcus furiosus (strain ATCC 43587 / DSM 3638 / JCM 8422 / Vc1).